Consider the following 134-residue polypeptide: Ribosome-binding factor A (134 aa).

Belongs to the RbfA family. As to quaternary structure, monomer. Binds 30S ribosomal subunits, but not 50S ribosomal subunits or 70S ribosomes.

It localises to the cytoplasm. Functionally, one of several proteins that assist in the late maturation steps of the functional core of the 30S ribosomal subunit. Associates with free 30S ribosomal subunits (but not with 30S subunits that are part of 70S ribosomes or polysomes). Required for efficient processing of 16S rRNA. May interact with the 5'-terminal helix region of 16S rRNA. In Psychrobacter cryohalolentis (strain ATCC BAA-1226 / DSM 17306 / VKM B-2378 / K5), this protein is Ribosome-binding factor A.